We begin with the raw amino-acid sequence, 287 residues long: Nucleotide-binding protein VV0445 (287 aa).

Position 8–15 (8–15) interacts with ATP; that stretch reads GHSGAGKS. GTP is bound at residue 56-59; it reads DVRN.

The protein belongs to the RapZ-like family.

In terms of biological role, displays ATPase and GTPase activities. This Vibrio vulnificus (strain YJ016) protein is Nucleotide-binding protein VV0445.